The chain runs to 133 residues: Small ribosomal subunit protein uS9 (133 aa).

Residues 98 to 113 (RKPLKTEGHLSRDPRA) show a composition bias toward basic and acidic residues. Residues 98–133 (RKPLKTEGHLSRDPRAKERRKYGLKKARKAPQFSKR) are disordered. Residues 114 to 133 (KERRKYGLKKARKAPQFSKR) are compositionally biased toward basic residues.

This sequence belongs to the universal ribosomal protein uS9 family.

The polypeptide is Small ribosomal subunit protein uS9 (Synechococcus sp. (strain CC9902)).